A 457-amino-acid chain; its full sequence is Cysteine--tRNA ligase (457 aa).

Cys28 serves as a coordination point for Zn(2+). The 'HIGH' region motif lies at 30-40; that stretch reads MTVYDYCHLGH. Zn(2+) contacts are provided by Cys209, His234, and Glu238. The 'KMSKS' region signature appears at 266-270; the sequence is KMSKS. An ATP-binding site is contributed by Lys269.

It belongs to the class-I aminoacyl-tRNA synthetase family. In terms of assembly, monomer. It depends on Zn(2+) as a cofactor.

It is found in the cytoplasm. The enzyme catalyses tRNA(Cys) + L-cysteine + ATP = L-cysteinyl-tRNA(Cys) + AMP + diphosphate. This Laribacter hongkongensis (strain HLHK9) protein is Cysteine--tRNA ligase.